Consider the following 202-residue polypeptide: Type II restriction enzyme MunI (202 aa).

As to quaternary structure, homodimer.

It carries out the reaction Endonucleolytic cleavage of DNA to give specific double-stranded fragments with terminal 5'-phosphates.. A P subtype restriction enzyme that recognizes the double-stranded sequence 5'-CAATTG-3' and cleaves after C-1. This is Type II restriction enzyme MunI from Mycoplasma sp.